The chain runs to 215 residues: Ribosomal RNA small subunit methyltransferase G (215 aa).

S-adenosyl-L-methionine-binding positions include Gly-77, Phe-82, 130-131 (IE), and Arg-146.

It belongs to the methyltransferase superfamily. RNA methyltransferase RsmG family.

The protein localises to the cytoplasm. It catalyses the reaction guanosine(527) in 16S rRNA + S-adenosyl-L-methionine = N(7)-methylguanosine(527) in 16S rRNA + S-adenosyl-L-homocysteine. In terms of biological role, specifically methylates the N7 position of guanine in position 527 of 16S rRNA. The sequence is that of Ribosomal RNA small subunit methyltransferase G from Bartonella henselae (strain ATCC 49882 / DSM 28221 / CCUG 30454 / Houston 1) (Rochalimaea henselae).